Consider the following 462-residue polypeptide: MTTMTAERAPRIGMVSLGCPKALTDSELILTQLSAEGYETSKTFQGADLVIVNTCGFIDDAVKESLDTIGEALAENGKVIVTGCLGARTGADGGNMVRQLHPSVLAVTGPQATQQVLDAVHRNLPKPHDPFIDLVPGGMGIAGLKLTPRHYAYLKISEGCNHRCTFCIIPTLRGALVSRPIGAVLNEARALFAGGVKELLVISQDSSAYGVDMQYRTGFWDGQPLKTRLLELVQALGALAEPYGAWVRLHYVYPYPSVDALIPLMAQGRVLPYLDVPLQHSHPEVLRRMKRPASGERNLERIQRWREVCPEIVIRSSFIVGFPGETQAEFEHLLDFLRAARIDRVGCFAYSDVSGAVANDLPGMLPMPLRQERRARFMAVAEALSSAKLQRRVGATMQVLIDAAPGLGRKGGVGRSYADAPEIDGAVHLLPPEKISKTLKVGEFTQARIVGVRGHDLLAQPI.

In terms of domain architecture, MTTase N-terminal spans 10–125; sequence PRIGMVSLGC…VLDAVHRNLP (116 aa). C19, C55, C84, C160, C164, and C167 together coordinate [4Fe-4S] cluster. Positions 146-388 constitute a Radical SAM core domain; the sequence is LTPRHYAYLK…AVAEALSSAK (243 aa). The 73-residue stretch at 390–462 folds into the TRAM domain; that stretch reads QRRVGATMQV…RGHDLLAQPI (73 aa).

This sequence belongs to the methylthiotransferase family. RimO subfamily. [4Fe-4S] cluster serves as cofactor.

Its subcellular location is the cytoplasm. It catalyses the reaction L-aspartate(89)-[ribosomal protein uS12]-hydrogen + (sulfur carrier)-SH + AH2 + 2 S-adenosyl-L-methionine = 3-methylsulfanyl-L-aspartate(89)-[ribosomal protein uS12]-hydrogen + (sulfur carrier)-H + 5'-deoxyadenosine + L-methionine + A + S-adenosyl-L-homocysteine + 2 H(+). Catalyzes the methylthiolation of an aspartic acid residue of ribosomal protein uS12. In Verminephrobacter eiseniae (strain EF01-2), this protein is Ribosomal protein uS12 methylthiotransferase RimO.